Consider the following 95-residue polypeptide: Nucleoid-associated protein MARTH_orf159 (95 aa).

It belongs to the YbaB/EbfC family. Homodimer.

Its subcellular location is the cytoplasm. The protein localises to the nucleoid. Binds to DNA and alters its conformation. May be involved in regulation of gene expression, nucleoid organization and DNA protection. This chain is Nucleoid-associated protein MARTH_orf159, found in Metamycoplasma arthritidis (strain 158L3-1) (Mycoplasma arthritidis).